Here is a 127-residue protein sequence, read N- to C-terminus: Ribonuclease VapC6 (127 aa).

The PINc domain maps to 26-120 (EPQRAEFCRS…ERHLPDIRVR (95 aa)). Aspartate 86 is a binding site for Mg(2+).

It belongs to the PINc/VapC protein family. The cofactor is Mg(2+).

In terms of biological role, toxic component of a type II toxin-antitoxin (TA) system. An RNase. The cognate antitoxin is VapB6. This chain is Ribonuclease VapC6, found in Mycobacterium tuberculosis (strain CDC 1551 / Oshkosh).